The chain runs to 490 residues: Transmembrane protein 185-like (490 aa).

Residues 1–31 (MIENENTSLLSTSSSSTSSSPNNANSPSSLN) are compositionally biased toward low complexity. 2 disordered regions span residues 1–151 (MIEN…SKYK) and 455–490 (NMIN…ISNL). The segment covering 47–59 (TSGNNSPSAQITK) has biased composition (polar residues). Low complexity-rich tracts occupy residues 66 to 80 (SNNS…NSRS) and 89 to 108 (NNNN…NNIN). A compositionally biased stretch (polar residues) spans 109 to 125 (KHNSIVYNKSNNKLNSI). The span at 133–145 (QGGGGGNGNGNGN) shows a compositional bias: gly residues. Positions 463–472 (SESESDDETE) are enriched in acidic residues.

This sequence belongs to the TMEM185 family.

This Dictyostelium discoideum (Social amoeba) protein is Transmembrane protein 185-like.